The chain runs to 445 residues: UPF0210 protein SPP_0289 (445 aa).

It belongs to the UPF0210 family. Homodimer.

This chain is UPF0210 protein SPP_0289, found in Streptococcus pneumoniae (strain P1031).